A 119-amino-acid polypeptide reads, in one-letter code: Large ribosomal subunit protein uL22 (119 aa).

It belongs to the universal ribosomal protein uL22 family. As to quaternary structure, part of the 50S ribosomal subunit.

This protein binds specifically to 23S rRNA; its binding is stimulated by other ribosomal proteins, e.g. L4, L17, and L20. It is important during the early stages of 50S assembly. It makes multiple contacts with different domains of the 23S rRNA in the assembled 50S subunit and ribosome. Its function is as follows. The globular domain of the protein is located near the polypeptide exit tunnel on the outside of the subunit, while an extended beta-hairpin is found that lines the wall of the exit tunnel in the center of the 70S ribosome. This Chlorobium phaeovibrioides (strain DSM 265 / 1930) (Prosthecochloris vibrioformis (strain DSM 265)) protein is Large ribosomal subunit protein uL22.